We begin with the raw amino-acid sequence, 88 residues long: MQAVFSSPSPAPVTPLMPLPDITQERFLRVPEVMHLCGLSRSTIYELIRKGEFPPQVSLGGKNVAWLHSEVTAWMAGRIAGRKRGYDA.

The segment at residues 30–49 (VPEVMHLCGLSRSTIYELIR) is a DNA-binding region (H-T-H motif).

This sequence to E.coli prophage CP4-57 regulatory protein alpA.

This is an uncharacterized protein from Escherichia coli (Bacteriophage P4).